The chain runs to 54 residues: ATP synthase F(0) complex subunit 8 (54 aa).

The chain crosses the membrane as a helical span at residues 9 to 29; the sequence is WFMILFFSWVIFLTIIPTKII. Residues 35 to 54 form a disordered region; that stretch reads NDPTQVDAKEHKNDTWNWPW.

Belongs to the ATPase protein 8 family. Component of the ATP synthase complex composed at least of ATP5F1A/subunit alpha, ATP5F1B/subunit beta, ATP5MC1/subunit c (homooctomer), MT-ATP6/subunit a, MT-ATP8/subunit 8, ATP5ME/subunit e, ATP5MF/subunit f, ATP5MG/subunit g, ATP5MK/subunit k, ATP5MJ/subunit j, ATP5F1C/subunit gamma, ATP5F1D/subunit delta, ATP5F1E/subunit epsilon, ATP5PF/subunit F6, ATP5PB/subunit b, ATP5PD/subunit d, ATP5PO/subunit OSCP. ATP synthase complex consists of a soluble F(1) head domain (subunits alpha(3) and beta(3)) - the catalytic core - and a membrane F(0) domain - the membrane proton channel (subunits c, a, 8, e, f, g, k and j). These two domains are linked by a central stalk (subunits gamma, delta, and epsilon) rotating inside the F1 region and a stationary peripheral stalk (subunits F6, b, d, and OSCP).

Its subcellular location is the mitochondrion membrane. Functionally, subunit 8, of the mitochondrial membrane ATP synthase complex (F(1)F(0) ATP synthase or Complex V) that produces ATP from ADP in the presence of a proton gradient across the membrane which is generated by electron transport complexes of the respiratory chain. ATP synthase complex consist of a soluble F(1) head domain - the catalytic core - and a membrane F(1) domain - the membrane proton channel. These two domains are linked by a central stalk rotating inside the F(1) region and a stationary peripheral stalk. During catalysis, ATP synthesis in the catalytic domain of F(1) is coupled via a rotary mechanism of the central stalk subunits to proton translocation. In vivo, can only synthesize ATP although its ATP hydrolase activity can be activated artificially in vitro. Part of the complex F(0) domain. The polypeptide is ATP synthase F(0) complex subunit 8 (Danio rerio (Zebrafish)).